The chain runs to 404 residues: Cysteine desulfurase IscS (404 aa).

Pyridoxal 5'-phosphate-binding positions include Ala-75–Thr-76, Asn-155, Gln-183, and Ser-203–His-205. Position 206 is an N6-(pyridoxal phosphate)lysine (Lys-206). A pyridoxal 5'-phosphate-binding site is contributed by Thr-243. Catalysis depends on Cys-328, which acts as the Cysteine persulfide intermediate. Position 328 (Cys-328) interacts with [2Fe-2S] cluster.

Belongs to the class-V pyridoxal-phosphate-dependent aminotransferase family. NifS/IscS subfamily. In terms of assembly, homodimer. Forms a heterotetramer with IscU, interacts with other sulfur acceptors. Pyridoxal 5'-phosphate is required as a cofactor.

The protein localises to the cytoplasm. It carries out the reaction (sulfur carrier)-H + L-cysteine = (sulfur carrier)-SH + L-alanine. It functions in the pathway cofactor biosynthesis; iron-sulfur cluster biosynthesis. Functionally, master enzyme that delivers sulfur to a number of partners involved in Fe-S cluster assembly, tRNA modification or cofactor biosynthesis. Catalyzes the removal of elemental sulfur and selenium atoms from cysteine and selenocysteine to produce alanine. Functions as a sulfur delivery protein for Fe-S cluster synthesis onto IscU, an Fe-S scaffold assembly protein, as well as other S acceptor proteins. Also functions as a selenium delivery protein in the pathway for the biosynthesis of selenophosphate. This Salmonella typhi protein is Cysteine desulfurase IscS.